The primary structure comprises 269 residues: MLFFTQCFGAVLDLIHLRFQHYKAKRVFSAAGQLVCVVNPTHNLKYVSSRRAVTQSAPEQGSFHPHHLSHHHCHHRHHHHLRHHAHPHHLHHQEAGLHANPVTPCLCMCPLFSCQWEGRLEVVVPHLRQIHRVDILQGAEIVFLATDMHLPAPADWIIMHSCLGHHFLLVLRKQERHEGHPQFFATMMLIGTPTQADCFTYRLELNRNHRRLKWEATPRSVLECVDSVITDGDCLVLNTSLAQLFSDNGSLAIGIAITATEVLPSEAEM.

The segment at 61–132 adopts an SIAH-type; degenerate zinc-finger fold; the sequence is GSFHPHHLSH…VVPHLRQIHR (72 aa). The Zn(2+) site is built by C107, C114, H126, and H131.

It belongs to the SINA (Seven in absentia) family.

It localises to the mitochondrion. In terms of biological role, negative regulator of PRKN translocation to damaged mitochondria. Acts probably by destabilizing PINK1 protein, hence inhibiting PRKN targeting to dysfunctional depolarized mitochondria. This Homo sapiens (Human) protein is Seven in absentia homolog 3 (SIAH3).